The primary structure comprises 270 residues: MSVEQSLLGKETQYPTSYQPDVLFPIARAQSREKYAHIEGITQGKDWWHVFEISWLNAHGIPQVAIGRITLPASSPNLIESKSLKLYFNSLNFTQFDSTQSFIETVEKDLSAAAGAKVELTLFQVDDLEISKPQGICIDDLMPERLEQHPDATLLKLDESGEEIEVELYSHLLRSNCPVTGQPDWGTVFIRFKGKKPCYRSLLAYIISYRQHNGFHEQCVEQIFADIWQNLQPEKLMVYATYTRRGGLDINPCRVSDLTWMPKPIRLARQ.

Substrate is bound at residue 79–81 (IES). 81-82 (SK) lines the NADPH pocket. Cys177 acts as the Thioimide intermediate in catalysis. Residue Asp184 is the Proton donor of the active site. 216–217 (HE) is a binding site for substrate. 245-246 (RG) is a binding site for NADPH.

Belongs to the GTP cyclohydrolase I family. QueF type 2 subfamily. As to quaternary structure, homodimer.

The protein resides in the cytoplasm. The enzyme catalyses 7-aminomethyl-7-carbaguanine + 2 NADP(+) = 7-cyano-7-deazaguanine + 2 NADPH + 3 H(+). It participates in tRNA modification; tRNA-queuosine biosynthesis. Functionally, catalyzes the NADPH-dependent reduction of 7-cyano-7-deazaguanine (preQ0) to 7-aminomethyl-7-deazaguanine (preQ1). The polypeptide is NADPH-dependent 7-cyano-7-deazaguanine reductase (Acinetobacter baumannii (strain ACICU)).